A 589-amino-acid chain; its full sequence is Probable translation initiation factor IF-2 (589 aa).

One can recognise a tr-type G domain in the interval 4-225 (VRSPFVVVMG…AGVSQRFIPR (222 aa)). The tract at residues 13 to 20 (GHVDVGKT) is G1. GTP is bound at residue 13–20 (GHVDVGKT). Residues 38–42 (MITQH) are G2. Positions 79–82 (DTPG) are G3. Residues 79–83 (DTPGH) and 133–136 (NKLD) each bind GTP. The tract at residues 133 to 136 (NKLD) is G4. Residues 201 to 203 (SAV) are G5.

This sequence belongs to the TRAFAC class translation factor GTPase superfamily. Classic translation factor GTPase family. IF-2 subfamily.

Function in general translation initiation by promoting the binding of the formylmethionine-tRNA to ribosomes. Seems to function along with eIF-2. This is Probable translation initiation factor IF-2 from Pyrobaculum aerophilum (strain ATCC 51768 / DSM 7523 / JCM 9630 / CIP 104966 / NBRC 100827 / IM2).